A 542-amino-acid chain; its full sequence is MTRYVFITGGVVSSLGKGLASAALAALLQARGYRVRLRKLDPYLNVDPGTMSPTQHGEVFVTDDGAETDLDLGHYERFTGLPASRADNVTTGRIYLDIITKERRGDYLGATIQVIPHVTNAIKAFVLDGNDDYDFVLVEIGGTVGDIEGLPFFEAIRQIGQERPRGSVCYLHLTLLPYIPSAGELKTKPTQHSVKELRSIGIQPDILLCRCDRPIPVDERRKLGLFCNVRESAVIEARDVDTIYAVPLSYREAGLDREILAHFQMKPEGEPKLERWQNILERVRNPEGEVTIAIVGKYTGLKDAYKSLTEALTHGGIANNVRVNLEWIEAEVFEREDPAPFLEGLHGILVPGGFGQRGAEGKIRAARYARERNIPYFGICFGMQMAVIEAARSLAGITDANSTEFGETREPVVGLLTEWMRGNELERRAAESDLGGTMRLGAYKATLAEGTKIAQMYGDTEISERHRHRYEVNMAYRECLEAKGLRFSGTSPDGLLPETVEHEGHPWFIGVQFHPELKSRPFEPHPLFKGFIAAAIEQSRLV.

Residues 1 to 265 (MTRYVFITGG…DREILAHFQM (265 aa)) form an amidoligase domain region. Ser-13 lines the CTP pocket. Ser-13 serves as a coordination point for UTP. ATP-binding positions include 14–19 (SLGKGL) and Asp-71. Asp-71 and Glu-139 together coordinate Mg(2+). Residues 146 to 148 (DIE), 186 to 191 (KTKPTQ), and Lys-222 each bind CTP. UTP contacts are provided by residues 186-191 (KTKPTQ) and Lys-222. 238–240 (RDV) lines the ATP pocket. The region spanning 291 to 541 (TIAIVGKYTG…IAAAIEQSRL (251 aa)) is the Glutamine amidotransferase type-1 domain. Position 353 (Gly-353) interacts with L-glutamine. Cys-380 functions as the Nucleophile; for glutamine hydrolysis in the catalytic mechanism. L-glutamine contacts are provided by residues 381 to 384 (FGMQ), Glu-404, and Arg-469. Catalysis depends on residues His-514 and Glu-516.

This sequence belongs to the CTP synthase family. As to quaternary structure, homotetramer.

It carries out the reaction UTP + L-glutamine + ATP + H2O = CTP + L-glutamate + ADP + phosphate + 2 H(+). The enzyme catalyses L-glutamine + H2O = L-glutamate + NH4(+). It catalyses the reaction UTP + NH4(+) + ATP = CTP + ADP + phosphate + 2 H(+). The protein operates within pyrimidine metabolism; CTP biosynthesis via de novo pathway; CTP from UDP: step 2/2. Its activity is regulated as follows. Allosterically activated by GTP, when glutamine is the substrate; GTP has no effect on the reaction when ammonia is the substrate. The allosteric effector GTP functions by stabilizing the protein conformation that binds the tetrahedral intermediate(s) formed during glutamine hydrolysis. Inhibited by the product CTP, via allosteric rather than competitive inhibition. Functionally, catalyzes the ATP-dependent amination of UTP to CTP with either L-glutamine or ammonia as the source of nitrogen. Regulates intracellular CTP levels through interactions with the four ribonucleotide triphosphates. This Methylorubrum populi (strain ATCC BAA-705 / NCIMB 13946 / BJ001) (Methylobacterium populi) protein is CTP synthase.